We begin with the raw amino-acid sequence, 625 residues long: Low affinity potassium transport system protein Kup (625 aa).

The next 12 membrane-spanning stretches (helical) occupy residues T15–I35, I58–I78, F103–I123, L140–I160, I171–I191, F218–I238, L251–L271, F282–I302, I340–F360, L366–L386, F396–I416, and I422–T442.

It belongs to the HAK/KUP transporter (TC 2.A.72) family.

The protein resides in the cell membrane. It catalyses the reaction K(+)(in) + H(+)(in) = K(+)(out) + H(+)(out). Its function is as follows. Responsible for the low-affinity transport of potassium into the cell. Likely operates as a K(+):H(+) symporter. The polypeptide is Low affinity potassium transport system protein Kup (Wigglesworthia glossinidia brevipalpis).